Reading from the N-terminus, the 43-residue chain is Protein PsbN (43 aa).

A helical membrane pass occupies residues 5-25 (TVLSIFISSLLLGITIYSIYI).

The protein belongs to the PsbN family.

It localises to the plastid. The protein localises to the chloroplast thylakoid membrane. May play a role in photosystem I and II biogenesis. This chain is Protein PsbN, found in Gracilaria tenuistipitata var. liui (Red alga).